Consider the following 69-residue polypeptide: Neurotoxin Cex7 (69 aa).

Residue A1 is a signal peptide. One can recognise an LCN-type CS-alpha/beta domain in the interval R2 to G67. 4 cysteine pairs are disulfide-bonded: C13-C66, C17-C42, C26-C47, and C30-C49. C66 is subject to Cysteine amide. Positions G67–K69 are excised as a propeptide.

Belongs to the long (4 C-C) scorpion toxin superfamily. Sodium channel inhibitor family. Beta subfamily. As to expression, expressed by the venom gland.

It localises to the secreted. In terms of biological role, beta toxins bind voltage-independently at site-4 of sodium channels (Nav) and shift the voltage of activation toward more negative potentials thereby affecting sodium channel activation and promoting spontaneous and repetitive firing. This Centruroides exilicauda (Bark scorpion) protein is Neurotoxin Cex7.